A 470-amino-acid chain; its full sequence is UTP--glucose-1-phosphate uridylyltransferase 1 (470 aa).

Alanine 2 is modified (N-acetylalanine). UTP contacts are provided by residues 86-89 (LNGG), lysine 100, glutamine 163, and glycine 192. Substrate is bound at residue 88 to 89 (GG). Residues histidine 193 and 221–223 (NSD) contribute to the substrate site. Positions 223 and 361 each coordinate UTP.

Belongs to the UDPGP type 1 family. Expressed in roots, rosette leaves, cauline leaves, stems, flowers and siliques.

The protein localises to the cytoplasm. The enzyme catalyses alpha-D-glucose 1-phosphate + UTP + H(+) = UDP-alpha-D-glucose + diphosphate. Its function is as follows. Converts glucose 1-phosphate to UDP-glucose, which is the major glycosyl donor for polysaccharides. Acts redundantly with UGP2 and is essential for the synthesis of sucrose, starch and cell wall, and callose deposition. Involved in the regulation of the programmed cell death (PCD) induced by the fungal toxin fumonisin B1 (FB1). This Arabidopsis thaliana (Mouse-ear cress) protein is UTP--glucose-1-phosphate uridylyltransferase 1.